Consider the following 240-residue polypeptide: Probable transcriptional regulatory protein BLi02909/BL01150 (240 aa).

Basic residues predominate over residues 1-14 (MAGHSKWKNIQRRK). Positions 1–21 (MAGHSKWKNIQRRKNAQDAKR) are disordered.

It belongs to the TACO1 family.

The protein localises to the cytoplasm. In Bacillus licheniformis (strain ATCC 14580 / DSM 13 / JCM 2505 / CCUG 7422 / NBRC 12200 / NCIMB 9375 / NCTC 10341 / NRRL NRS-1264 / Gibson 46), this protein is Probable transcriptional regulatory protein BLi02909/BL01150.